A 163-amino-acid polypeptide reads, in one-letter code: Thiol peroxidase (163 aa).

In terms of domain architecture, Thioredoxin spans 16-162 (LQVGDTAHDF…YDAAIAAVKS (147 aa)). The active-site Cysteine sulfenic acid (-SOH) intermediate is Cys58. A disulfide bridge links Cys58 with Cys92.

It belongs to the peroxiredoxin family. Tpx subfamily. Homodimer.

It carries out the reaction a hydroperoxide + [thioredoxin]-dithiol = an alcohol + [thioredoxin]-disulfide + H2O. In terms of biological role, thiol-specific peroxidase that catalyzes the reduction of hydrogen peroxide and organic hydroperoxides to water and alcohols, respectively. Plays a role in cell protection against oxidative stress by detoxifying peroxides. The protein is Thiol peroxidase of Streptococcus sanguinis.